Here is a 312-residue protein sequence, read N- to C-terminus: Porphobilinogen deaminase (312 aa).

Position 241 is an S-(dipyrrolylmethanemethyl)cysteine (Cys241).

This sequence belongs to the HMBS family. As to quaternary structure, monomer. It depends on dipyrromethane as a cofactor.

It carries out the reaction 4 porphobilinogen + H2O = hydroxymethylbilane + 4 NH4(+). Its pathway is porphyrin-containing compound metabolism; protoporphyrin-IX biosynthesis; coproporphyrinogen-III from 5-aminolevulinate: step 2/4. Tetrapolymerization of the monopyrrole PBG into the hydroxymethylbilane pre-uroporphyrinogen in several discrete steps. This Trichlorobacter lovleyi (strain ATCC BAA-1151 / DSM 17278 / SZ) (Geobacter lovleyi) protein is Porphobilinogen deaminase.